A 229-amino-acid polypeptide reads, in one-letter code: Interleukin-22 receptor subunit alpha-2 (229 aa).

An N-terminal signal peptide occupies residues 1–19 (MPKHCFLGLLIMLLTTATE). Fibronectin type-III domains are found at residues 28 to 127 (KPQK…TKLD) and 128 to 229 (PPVV…VQIP). N54 is a glycosylation site (N-linked (GlcNAc...) asparagine). Disulfide bonds link C76–C84 and C204–C225.

This sequence belongs to the type II cytokine receptor family.

Its subcellular location is the secreted. Functionally, receptor for IL22. Binds to IL22, prevents interaction with the functional IL-22R complex and blocks the activity of IL22 (in vitro). May play an important role as an IL22 antagonist in the regulation of inflammatory responses. The chain is Interleukin-22 receptor subunit alpha-2 (Il22ra2) from Rattus norvegicus (Rat).